Here is a 434-residue protein sequence, read N- to C-terminus: Serine--tRNA ligase (434 aa).

L-serine is bound at residue 239 to 241; the sequence is TAE. 270–272 lines the ATP pocket; it reads RSE. Residue Glu-293 coordinates L-serine. 357-360 contacts ATP; it reads EISS. Ser-392 lines the L-serine pocket.

It belongs to the class-II aminoacyl-tRNA synthetase family. Type-1 seryl-tRNA synthetase subfamily. As to quaternary structure, homodimer. The tRNA molecule binds across the dimer.

It localises to the cytoplasm. It carries out the reaction tRNA(Ser) + L-serine + ATP = L-seryl-tRNA(Ser) + AMP + diphosphate + H(+). The catalysed reaction is tRNA(Sec) + L-serine + ATP = L-seryl-tRNA(Sec) + AMP + diphosphate + H(+). Its pathway is aminoacyl-tRNA biosynthesis; selenocysteinyl-tRNA(Sec) biosynthesis; L-seryl-tRNA(Sec) from L-serine and tRNA(Sec): step 1/1. In terms of biological role, catalyzes the attachment of serine to tRNA(Ser). Is also able to aminoacylate tRNA(Sec) with serine, to form the misacylated tRNA L-seryl-tRNA(Sec), which will be further converted into selenocysteinyl-tRNA(Sec). This Cupriavidus necator (strain ATCC 17699 / DSM 428 / KCTC 22496 / NCIMB 10442 / H16 / Stanier 337) (Ralstonia eutropha) protein is Serine--tRNA ligase.